The chain runs to 63 residues: Large ribosomal subunit protein uL29 (63 aa).

The protein belongs to the universal ribosomal protein uL29 family.

This chain is Large ribosomal subunit protein uL29, found in Yersinia pseudotuberculosis serotype O:1b (strain IP 31758).